Consider the following 71-residue polypeptide: ATP synthase subunit c 1 (71 aa).

2 helical membrane-spanning segments follow: residues 4 to 24 (FIGA…VGHV) and 46 to 66 (LFVG…IALL).

Belongs to the ATPase C chain family. In terms of assembly, F-type ATPases have 2 components, F(1) - the catalytic core - and F(0) - the membrane proton channel. F(1) has five subunits: alpha(3), beta(3), gamma(1), delta(1), epsilon(1). F(0) has four main subunits: a(1), b(1), b'(1) and c(10-14). The alpha and beta chains form an alternating ring which encloses part of the gamma chain. F(1) is attached to F(0) by a central stalk formed by the gamma and epsilon chains, while a peripheral stalk is formed by the delta, b and b' chains.

Its subcellular location is the cell inner membrane. Its function is as follows. F(1)F(0) ATP synthase produces ATP from ADP in the presence of a proton or sodium gradient. F-type ATPases consist of two structural domains, F(1) containing the extramembraneous catalytic core and F(0) containing the membrane proton channel, linked together by a central stalk and a peripheral stalk. During catalysis, ATP synthesis in the catalytic domain of F(1) is coupled via a rotary mechanism of the central stalk subunits to proton translocation. Functionally, key component of the F(0) channel; it plays a direct role in translocation across the membrane. A homomeric c-ring of between 10-14 subunits forms the central stalk rotor element with the F(1) delta and epsilon subunits. This chain is ATP synthase subunit c 1, found in Cereibacter sphaeroides (strain ATCC 17029 / ATH 2.4.9) (Rhodobacter sphaeroides).